We begin with the raw amino-acid sequence, 251 residues long: Hydroxyacylglutathione hydrolase (251 aa).

Residues H53, H55, D57, H58, H110, D127, and H165 each contribute to the Zn(2+) site.

This sequence belongs to the metallo-beta-lactamase superfamily. Glyoxalase II family. In terms of assembly, monomer. Zn(2+) serves as cofactor.

It catalyses the reaction an S-(2-hydroxyacyl)glutathione + H2O = a 2-hydroxy carboxylate + glutathione + H(+). Its pathway is secondary metabolite metabolism; methylglyoxal degradation; (R)-lactate from methylglyoxal: step 2/2. In terms of biological role, thiolesterase that catalyzes the hydrolysis of S-D-lactoyl-glutathione to form glutathione and D-lactic acid. The sequence is that of Hydroxyacylglutathione hydrolase from Blochmanniella pennsylvanica (strain BPEN).